A 332-amino-acid chain; its full sequence is Palmitoyltransferase ZDHHC15B (332 aa).

Topologically, residues 1 to 14 (MALSRALRCCQRIF) are cytoplasmic. The chain crosses the membrane as a helical span at residues 15 to 35 (SWIPVIIISSVVLWSYYAYVF). The Lumenal segment spans residues 36–50 (ELCFVTLSNNLERVT). The chain crosses the membrane as a helical span at residues 51-71 (YLLIFHVCFIMFCWTYWKAIF). Topologically, residues 72 to 166 (TPPSTPTKKF…NNCVGFSNYK (95 aa)) are cytoplasmic. Residues 123–173 (RFCDRCQVIKPDRCHHCSVCETCVLKMDHHCPWVNNCVGFSNYKFFLLFLS) enclose the DHHC domain. Cys125 and Cys128 together coordinate Zn(2+). Residue Lys132 coordinates substrate. Zn(2+) contacts are provided by His138, Cys139, Cys142, Cys145, and His152. Cys153 functions as the S-palmitoyl cysteine intermediate in the catalytic mechanism. Cys159 serves as a coordination point for Zn(2+). A helical transmembrane segment spans residues 167–187 (FFLLFLSYSMIYCVFIASTVF). At 188-204 (QYFLKFWVGDLPNGPAK) the chain is on the lumenal side. A helical transmembrane segment spans residues 205–228 (FHVLFLLFVALMFFVSLMFLFGYH). Residues 229 to 332 (CWLVAKNRST…GSSLLIRTES (104 aa)) lie on the Cytoplasmic side of the membrane. The interval 305-332 (EEKWVEDGGSDEESADENGSSLLIRTES) is disordered.

The protein belongs to the DHHC palmitoyltransferase family. Autopalmitoylated (in vitro).

The protein resides in the golgi apparatus membrane. Its subcellular location is the postsynaptic density. The catalysed reaction is L-cysteinyl-[protein] + hexadecanoyl-CoA = S-hexadecanoyl-L-cysteinyl-[protein] + CoA. The enzyme catalyses L-cysteinyl-[protein] + tetradecanoyl-CoA = S-tetradecanoyl-L-cysteinyl-[protein] + CoA. It carries out the reaction L-cysteinyl-[protein] + octadecanoyl-CoA = S-octadecanoyl-L-cysteinyl-[protein] + CoA. Functionally, palmitoyltransferase that catalyzes the addition of palmitate onto various protein substrates. Has no stringent fatty acid selectivity and in addition to palmitate can also transfer onto target proteins myristate from tetradecanoyl-CoA and stearate from octadecanoyl-CoA. May thereby regulate target proteins association and localization to membranes. In the nervous system, probably catalyzes the palmitoylation of synaptic proteins and is involved in the differentiation of dopaminergic neurons and the development of the diencephalon. The protein is Palmitoyltransferase ZDHHC15B (zdhhc15b) of Danio rerio (Zebrafish).